The following is a 356-amino-acid chain: Metacaspase-1 (356 aa).

Residues 1–47 are disordered; sequence MYSGRSGAPPPAHSPYPNSYNHGPPGHSAGHNVPPPPPTQPVQFGHG. Residues His-147 and Cys-203 contribute to the active site.

Belongs to the peptidase C14B family.

Involved in cell death (apoptosis). In Ajellomyces capsulatus (strain NAm1 / WU24) (Darling's disease fungus), this protein is Metacaspase-1 (MCA1).